The sequence spans 1087 residues: Exportin-7 (1087 aa).

N-acetylalanine is present on Ala2. Residues 30 to 96 form the Importin N-terminal domain; sequence AEKALVEFTN…RNYVLNYLAT (67 aa). The residue at position 570 (Ser570) is a Phosphoserine.

Belongs to the exportin family. In terms of assembly, binds to nucleoporins. Found in a complex with XPO7, EIF4A1, ARHGAP1, VPS26A, VPS29, VPS35 and SFN. Interacts with ARHGAP1 and SFN. Interacts with Ran and cargo proteins in a GTP-dependent manner.

The protein localises to the cytoplasm. It localises to the nucleus. It is found in the nuclear pore complex. Mediates the nuclear export of proteins (cargos) with broad substrate specificity. In the nucleus binds cooperatively to its cargo and to the GTPase Ran in its active GTP-bound form. Docking of this trimeric complex to the nuclear pore complex (NPC) is mediated through binding to nucleoporins. Upon transit of a nuclear export complex into the cytoplasm, disassembling of the complex and hydrolysis of Ran-GTP to Ran-GDP (induced by RANBP1 and RANGAP1, respectively) cause release of the cargo from the export receptor. XPO7 then return to the nuclear compartment and mediate another round of transport. The directionality of nuclear export is thought to be conferred by an asymmetric distribution of the GTP- and GDP-bound forms of Ran between the cytoplasm and nucleus. The protein is Exportin-7 (XPO7) of Pongo abelii (Sumatran orangutan).